Here is a 504-residue protein sequence, read N- to C-terminus: Anaerobic nitric oxide reductase transcription regulator NorR (504 aa).

D57 carries the 4-aspartylphosphate modification. Residues 187–416 enclose the Sigma-54 factor interaction domain; that stretch reads MIGLSPGMTQ…LEHAIHRAVV (230 aa). Residues 215–222 and 278–287 contribute to the ATP site; these read GETGTGKE and ADNGTLFLDE. The H-T-H motif DNA-binding region spans 479-498; sequence WAACARMLETDVANLHRLAK.

It participates in nitrogen metabolism; nitric oxide reduction. Functionally, required for the expression of anaerobic nitric oxide (NO) reductase, acts as a transcriptional activator for at least the norVW operon. Activation also requires sigma-54. The chain is Anaerobic nitric oxide reductase transcription regulator NorR from Shigella flexneri serotype 5b (strain 8401).